We begin with the raw amino-acid sequence, 166 residues long: Sec-independent protein translocase protein TatB (166 aa).

Residues 2-22 (FDGIGFMELLLIGVLGLVVLG) traverse the membrane as a helical segment. Positions 69 to 166 (SKGLSNLSPE…DTRSNPKANG (98 aa)) are disordered. Composition is skewed to polar residues over residues 88 to 97 (QAAQSVNRPY) and 112 to 132 (QIYS…SQAN). Positions 133–153 (PTATVEASPAPASPATPSEPS) are enriched in low complexity. Over residues 155-166 (GADTRSNPKANG) the composition is skewed to polar residues.

The protein belongs to the TatB family. In terms of assembly, the Tat system comprises two distinct complexes: a TatABC complex, containing multiple copies of TatA, TatB and TatC subunits, and a separate TatA complex, containing only TatA subunits. Substrates initially bind to the TatABC complex, which probably triggers association of the separate TatA complex to form the active translocon.

The protein resides in the cell inner membrane. In terms of biological role, part of the twin-arginine translocation (Tat) system that transports large folded proteins containing a characteristic twin-arginine motif in their signal peptide across membranes. Together with TatC, TatB is part of a receptor directly interacting with Tat signal peptides. TatB may form an oligomeric binding site that transiently accommodates folded Tat precursor proteins before their translocation. The chain is Sec-independent protein translocase protein TatB from Shewanella baltica (strain OS155 / ATCC BAA-1091).